The primary structure comprises 277 residues: tRNA (guanine-N(7)-)-methyltransferase (277 aa).

Residues 1–37 (MAGTETGDAAGTEAPQPQKRYYRQRAHSNPMADHTLR) form a disordered region. Position 28 is a phosphoserine (Ser-28). Gly-85, Glu-108, Arg-110, Asn-141, Ala-142, and Leu-161 together coordinate S-adenosyl-L-methionine. The active site involves Asp-164. An alphaC helix region spans residues 165–173 (PHFKRTKHK). Positions 239 and 241 each coordinate S-adenosyl-L-methionine. An alpha6 helix region spans residues 239–247 (TEEGKKVLR).

The protein belongs to the class I-like SAM-binding methyltransferase superfamily. TrmB family. Catalytic component of the METTL1-WDR4 complex, composed of METTL1 and WDR4. In terms of processing, phosphorylation at Ser-28 by PKB/AKT1 inactivates its methyltransferase activity via a steric interference mechanism in the active site that locally disrupts the catalytic center. Phosphorylation at Ser-28 does not affect the interaction with WDR4.

Its subcellular location is the nucleus. It catalyses the reaction guanosine(46) in tRNA + S-adenosyl-L-methionine = N(7)-methylguanosine(46) in tRNA + S-adenosyl-L-homocysteine. It carries out the reaction a guanosine in mRNA + S-adenosyl-L-methionine = an N(7)-methylguanosine in mRNA + S-adenosyl-L-homocysteine. The catalysed reaction is a guanosine in miRNA + S-adenosyl-L-methionine = an N(7)-methylguanosine in miRNA + S-adenosyl-L-homocysteine. It functions in the pathway tRNA modification; N(7)-methylguanine-tRNA biosynthesis. Catalytic component of METTL1-WDR4 methyltransferase complex that mediates the formation of N(7)-methylguanine in a subset of RNA species, such as tRNAs, mRNAs and microRNAs (miRNAs). Catalyzes the formation of N(7)-methylguanine at position 46 (m7G46) in a large subset of tRNAs that contain the 5'-RAGGU-3' motif within the variable loop. M7G46 interacts with C13-G22 in the D-loop to stabilize tRNA tertiary structure and protect tRNAs from decay. Also acts as a methyltransferase for a subset of internal N(7)-methylguanine in mRNAs. Internal N(7)-methylguanine methylation of mRNAs in response to stress promotes their relocalization to stress granules, thereby suppressing their translation. Also methylates a specific subset of miRNAs, such as let-7. N(7)-methylguanine methylation of let-7 miRNA promotes let-7 miRNA processing by disrupting an inhibitory secondary structure within the primary miRNA transcript (pri-miRNA). Acts as a regulator of embryonic stem cell self-renewal and differentiation. The polypeptide is tRNA (guanine-N(7)-)-methyltransferase (Bos taurus (Bovine)).